A 300-amino-acid polypeptide reads, in one-letter code: Protoheme IX farnesyltransferase (300 aa).

Transmembrane regions (helical) follow at residues 20–40 (ITKM…YFLG), 43–63 (TIDF…VGAS), 94–114 (PVAF…LYVI), 116–136 (PKTA…YTPL), 142–162 (LSVF…WVAA), 173–193 (LFMI…WWLF), 215–235 (IQII…VFGV), 241–261 (LTPV…YYAI), and 276–296 (MFAS…DKFI).

The protein belongs to the UbiA prenyltransferase family. Protoheme IX farnesyltransferase subfamily.

It is found in the cell membrane. It catalyses the reaction heme b + (2E,6E)-farnesyl diphosphate + H2O = Fe(II)-heme o + diphosphate. It participates in porphyrin-containing compound metabolism; heme O biosynthesis; heme O from protoheme: step 1/1. In terms of biological role, converts heme B (protoheme IX) to heme O by substitution of the vinyl group on carbon 2 of heme B porphyrin ring with a hydroxyethyl farnesyl side group. This is Protoheme IX farnesyltransferase from Christiangramia forsetii (strain DSM 17595 / CGMCC 1.15422 / KT0803) (Gramella forsetii).